A 230-amino-acid chain; its full sequence is Probable thioesterase YBR096W (230 aa).

Belongs to the lcsJ thioesterase family.

This Saccharomyces cerevisiae (strain ATCC 204508 / S288c) (Baker's yeast) protein is Probable thioesterase YBR096W.